A 216-amino-acid chain; its full sequence is Adenylate kinase (216 aa).

Position 10–15 (10–15) interacts with ATP; that stretch reads GAGKGT. Residues 30 to 59 form an NMP region; the sequence is STGDIFRKNIKEGTELGKKAKEYMDQGLLV. AMP is bound by residues Thr-31, Arg-36, 57–59, 85–88, and Gln-92; these read LLV and GFPR. The LID stretch occupies residues 126-163; it reads GRRICKSCGATYHVEFNPPKVEGVCDVCQGELYQRADD. Arg-127 provides a ligand contact to ATP. Residues Cys-130 and Cys-133 each coordinate Zn(2+). 136–137 is an ATP binding site; it reads TY. Residues Cys-150 and Cys-153 each contribute to the Zn(2+) site. 2 residues coordinate AMP: Arg-160 and Arg-171. Gln-199 is an ATP binding site.

The protein belongs to the adenylate kinase family. Monomer.

Its subcellular location is the cytoplasm. The enzyme catalyses AMP + ATP = 2 ADP. Its pathway is purine metabolism; AMP biosynthesis via salvage pathway; AMP from ADP: step 1/1. Its function is as follows. Catalyzes the reversible transfer of the terminal phosphate group between ATP and AMP. Plays an important role in cellular energy homeostasis and in adenine nucleotide metabolism. In Clostridioides difficile (strain 630) (Peptoclostridium difficile), this protein is Adenylate kinase.